Here is a 383-residue protein sequence, read N- to C-terminus: tRNA(Met) cytidine acetate ligase (383 aa).

ATP-binding positions include 7–20 (IAEFNPLHSGHEFL), Gly101, Asn153, and 178–179 (RI).

This sequence belongs to the TmcAL family.

It is found in the cytoplasm. It catalyses the reaction cytidine(34) in elongator tRNA(Met) + acetate + ATP = N(4)-acetylcytidine(34) in elongator tRNA(Met) + AMP + diphosphate. In terms of biological role, catalyzes the formation of N(4)-acetylcytidine (ac(4)C) at the wobble position of elongator tRNA(Met), using acetate and ATP as substrates. First activates an acetate ion to form acetyladenylate (Ac-AMP) and then transfers the acetyl group to tRNA to form ac(4)C34. This Lactobacillus acidophilus (strain ATCC 700396 / NCK56 / N2 / NCFM) protein is tRNA(Met) cytidine acetate ligase.